The primary structure comprises 379 residues: Chorismate synthase (379 aa).

Residues R48 and R54 each coordinate NADP(+). FMN is bound by residues 125–127 (RSS), 241–242 (NA), G286, 301–305 (KPTSS), and R327.

This sequence belongs to the chorismate synthase family. In terms of assembly, homotetramer. FMNH2 is required as a cofactor.

The catalysed reaction is 5-O-(1-carboxyvinyl)-3-phosphoshikimate = chorismate + phosphate. It functions in the pathway metabolic intermediate biosynthesis; chorismate biosynthesis; chorismate from D-erythrose 4-phosphate and phosphoenolpyruvate: step 7/7. In terms of biological role, catalyzes the anti-1,4-elimination of the C-3 phosphate and the C-6 proR hydrogen from 5-enolpyruvylshikimate-3-phosphate (EPSP) to yield chorismate, which is the branch point compound that serves as the starting substrate for the three terminal pathways of aromatic amino acid biosynthesis. This reaction introduces a second double bond into the aromatic ring system. This Rhodospirillum centenum (strain ATCC 51521 / SW) protein is Chorismate synthase.